A 1472-amino-acid chain; its full sequence is ABC transporter FGM5 (1472 aa).

The next 11 membrane-spanning stretches (helical) occupy residues 32–52 (IILG…RVAT), 67–87 (FTKL…LILS), 100–120 (FAVA…ALSF), 163–183 (YAGV…LELQ), 197–217 (SPEE…IGIF), 271–291 (ALIV…GFQY), 316–336 (GLIG…ALFW), 386–406 (FHGL…CFLL), 412–432 (LAFI…TAIA), 493–513 (LLIM…VVAF), and 534–554 (LLTN…AAFV). Positions 284–551 (IAMIGFQYAQ…MFQSVPAVIA (268 aa)) constitute an ABC transmembrane type-1 1 domain. In terms of domain architecture, ABC transporter 1 spans 605–834 (ISIVDGSFGW…GIYIPTLGLS (230 aa)). 638–645 (GPVASGKS) contributes to the ATP binding site. 5 N-linked (GlcNAc...) asparagine glycosylation sites follow: asparagine 682, asparagine 696, asparagine 763, asparagine 784, and asparagine 843. Transmembrane regions (helical) follow at residues 900–920 (LLSG…MGWW), 938–958 (LFRG…VIFM), 1003–1023 (GELP…FAMA), and 1024–1044 (VVVA…FSII). An ABC transmembrane type-1 2 domain is found at 900–1139 (LLSGIMYAVG…VGVVAISTQL (240 aa)). N-linked (GlcNAc...) asparagine glycosylation occurs at asparagine 1101. Residues 1116–1136 (FLATFLNLIVMVLAVGVVAIS) form a helical membrane-spanning segment. The ABC transporter 2 domain maps to 1218 to 1468 (YKNDDESPAS…EGSWFSQLWA (251 aa)). An ATP-binding site is contributed by 1255–1262 (GRTGSGKS). Residues asparagine 1277 and asparagine 1293 are each glycosylated (N-linked (GlcNAc...) asparagine).

The protein belongs to the ABC transporter superfamily. ABCC family. Conjugate transporter (TC 3.A.1.208) subfamily.

Its subcellular location is the cell membrane. It functions in the pathway secondary metabolite biosynthesis. Functionally, ABC transporter; part of the Fg3_54/C64 gene cluster that mediates the biosynthesis of the octapeptide fusaoctaxin A, a virulence factor that is required for cell-to-cell invasiveness of plant host. The 2 nonribosomal peptide synthetases NRPS9 and NRPS5 form an assembly line which likely utilizes GABA as a starter unit (loaded on the unique module M1 of NRPS9) and sequentially incorporates seven extender units composed of the residues L-Ala, L-allo-Ile, L-Ser, L-Val, L-Ser, L-Leu and L-Leu, respectively. During the process, each of the residues that are tethered on modules M3-M7 of NRPS5 containing an E domain can undergo an epimerization reaction to produce a D-configuration before the transpeptidation reaction occurs. The elongation of the peptidyl chain might be terminated by module M8-mediated L-Leu incorporation, followed by R domain-catalyzed 4 electron reduction to release the resulting octapeptide from the assembly line as an alcohol. Fusaoctaxin A is cleaved by the cluster specific ABC transporter FGM5 to the pentapeptide fusapentaxin A and the tripeptide fusatrixin A. The other enzymes from the cluster, FGM1, FGM2, FGM3 and FGM9 seem not to be involved in the biosynthesis of fusaoctaxin A and their functions have still to be determined. This Gibberella zeae (strain ATCC MYA-4620 / CBS 123657 / FGSC 9075 / NRRL 31084 / PH-1) (Wheat head blight fungus) protein is ABC transporter FGM5.